The chain runs to 149 residues: HQPANYLICSLAVTDLLVAVLVMPLSIMYIVMDSWRLGYFICEVWLSVDMTCCTCSILHLCVIALDRYWAITNAIEYARKRTAKRAGLMILTVWTISIFISMPPLFWRSHRQLSPPPSQCAIQHDHVIYTIYSTLGAFYIPLTLILILY.

Residues 1 to 6 (HQPANY) lie on the Extracellular side of the membrane. Residues 7 to 31 (LICSLAVTDLLVAVLVMPLSIMYIV) traverse the membrane as a helical segment. Residues 32–39 (MDSWRLGY) lie on the Cytoplasmic side of the membrane. Residues 40 to 65 (FICEVWLSVDMTCCTCSILHLCVIAL) form a helical membrane-spanning segment. C42 and C120 form a disulfide bridge. The serotonin site is built by D49 and C53. Residues 66-68 (DRY) carry the DRY motif; important for ligand-induced conformation changes motif. At 66–85 (DRYWAITNAIEYARKRTAKR) the chain is on the extracellular side. The chain crosses the membrane as a helical span at residues 86–104 (AGLMILTVWTISIFISMPP). At 105–149 (LFWRSHRQLSPPPSQCAIQHDHVIYTIYSTLGAFYIPLTLILILY) the chain is on the cytoplasmic side.

This sequence belongs to the G-protein coupled receptor 1 family.

It is found in the cell membrane. In terms of biological role, G-protein coupled receptor for 5-hydroxytryptamine (serotonin). Also functions as a receptor for various alkaloids and psychoactive substances. Ligand binding causes a conformation change that triggers signaling via guanine nucleotide-binding proteins (G proteins) and modulates the activity of downstream effectors, such as adenylate cyclase. HTR1E is coupled to G(i)/G(o) G alpha proteins and mediates inhibitory neurotransmission by inhibiting adenylate cyclase activity. This Sus scrofa (Pig) protein is 5-hydroxytryptamine receptor 1E (HTR1E).